The following is a 177-amino-acid chain: Peptide methionine sulfoxide reductase MsrA (177 aa).

Cysteine 15 is an active-site residue.

This sequence belongs to the MsrA Met sulfoxide reductase family.

It catalyses the reaction L-methionyl-[protein] + [thioredoxin]-disulfide + H2O = L-methionyl-(S)-S-oxide-[protein] + [thioredoxin]-dithiol. The catalysed reaction is [thioredoxin]-disulfide + L-methionine + H2O = L-methionine (S)-S-oxide + [thioredoxin]-dithiol. In terms of biological role, has an important function as a repair enzyme for proteins that have been inactivated by oxidation. Catalyzes the reversible oxidation-reduction of methionine sulfoxide in proteins to methionine. This chain is Peptide methionine sulfoxide reductase MsrA, found in Listeria welshimeri serovar 6b (strain ATCC 35897 / DSM 20650 / CCUG 15529 / CIP 8149 / NCTC 11857 / SLCC 5334 / V8).